Here is a 396-residue protein sequence, read N- to C-terminus: Formate-dependent phosphoribosylglycinamide formyltransferase (396 aa).

Residues 25 to 26 (EL) and Glu85 contribute to the N(1)-(5-phospho-beta-D-ribosyl)glycinamide site. ATP is bound by residues Arg117, Lys158, 163 to 168 (SSGKGQ), 198 to 201 (EAFI), and Glu206. Positions 122 to 311 (RLAAETLAIP…EFALHVRAIL (190 aa)) constitute an ATP-grasp domain. Glu270 and Glu282 together coordinate Mg(2+). N(1)-(5-phospho-beta-D-ribosyl)glycinamide-binding positions include Asp289, Lys359, and 366 to 367 (RR).

The protein belongs to the PurK/PurT family. In terms of assembly, homodimer.

The enzyme catalyses N(1)-(5-phospho-beta-D-ribosyl)glycinamide + formate + ATP = N(2)-formyl-N(1)-(5-phospho-beta-D-ribosyl)glycinamide + ADP + phosphate + H(+). Its pathway is purine metabolism; IMP biosynthesis via de novo pathway; N(2)-formyl-N(1)-(5-phospho-D-ribosyl)glycinamide from N(1)-(5-phospho-D-ribosyl)glycinamide (formate route): step 1/1. Functionally, involved in the de novo purine biosynthesis. Catalyzes the transfer of formate to 5-phospho-ribosyl-glycinamide (GAR), producing 5-phospho-ribosyl-N-formylglycinamide (FGAR). Formate is provided by PurU via hydrolysis of 10-formyl-tetrahydrofolate. The polypeptide is Formate-dependent phosphoribosylglycinamide formyltransferase (Shewanella frigidimarina (strain NCIMB 400)).